Reading from the N-terminus, the 207-residue chain is Large ribosomal subunit protein uL4 (207 aa).

The disordered stretch occupies residues 47-78 (GTAKTKTRAEVRGGGKKPWRQKGTGRARQGSI). Residues 60–71 (GGKKPWRQKGTG) show a composition bias toward basic residues.

The protein belongs to the universal ribosomal protein uL4 family. In terms of assembly, part of the 50S ribosomal subunit.

In terms of biological role, one of the primary rRNA binding proteins, this protein initially binds near the 5'-end of the 23S rRNA. It is important during the early stages of 50S assembly. It makes multiple contacts with different domains of the 23S rRNA in the assembled 50S subunit and ribosome. Forms part of the polypeptide exit tunnel. This chain is Large ribosomal subunit protein uL4, found in Acholeplasma laidlawii (strain PG-8A).